The chain runs to 376 residues: General transcription factor IIH subunit 2 (376 aa).

Positions 64 to 206 constitute a VWFA domain; that stretch reads HVMIVIDCSR…NIRCSAIGLS (143 aa). A C4-type zinc finger spans residues 286-303; the sequence is CTQCGARHCSIPAECPVC.

Belongs to the GTF2H2 family. Component of the 7-subunit TFIIH core complex composed of xpb-1, xpd-1, gtf-2H1, gtf-2H2C, gtf-2H3, Y73F8A.24 and gtf-2H5, which is active in NER. The core complex associates with the 3-subunit CDK-activating kinase (CAK) module composed of cyh-1, cdk-7 and mnat-1 to form the 10-subunit holoenzyme (holo-TFIIH) active in transcription.

It is found in the nucleus. In terms of biological role, component of the general transcription and DNA repair factor IIH (TFIIH) core complex, which is involved in general and transcription-coupled nucleotide excision repair (NER) of damaged DNA and, when complexed to CAK, in RNA transcription by RNA polymerase II. In NER, TFIIH acts by opening DNA around the lesion to allow the excision of the damaged oligonucleotide and its replacement by a new DNA fragment. In transcription, TFIIH has an essential role in transcription initiation. When the pre-initiation complex (PIC) has been established, TFIIH is required for promoter opening and promoter escape. Phosphorylation of the C-terminal tail (CTD) of the largest subunit of RNA polymerase II by the kinase module CAK controls the initiation of transcription. The sequence is that of General transcription factor IIH subunit 2 from Caenorhabditis elegans.